Consider the following 258-residue polypeptide: Ubiquinone/menaquinone biosynthesis C-methyltransferase UbiE (258 aa).

Positions 1 to 21 are disordered; it reads MPESRTSADGGMETSYGFREV. S-adenosyl-L-methionine contacts are provided by residues threonine 81, aspartate 102, and 130 to 131; that span reads NA.

The protein belongs to the class I-like SAM-binding methyltransferase superfamily. MenG/UbiE family.

The catalysed reaction is a 2-demethylmenaquinol + S-adenosyl-L-methionine = a menaquinol + S-adenosyl-L-homocysteine + H(+). It carries out the reaction a 2-methoxy-6-(all-trans-polyprenyl)benzene-1,4-diol + S-adenosyl-L-methionine = a 5-methoxy-2-methyl-3-(all-trans-polyprenyl)benzene-1,4-diol + S-adenosyl-L-homocysteine + H(+). It functions in the pathway quinol/quinone metabolism; menaquinone biosynthesis; menaquinol from 1,4-dihydroxy-2-naphthoate: step 2/2. Its pathway is cofactor biosynthesis; ubiquinone biosynthesis. Functionally, methyltransferase required for the conversion of demethylmenaquinol (DMKH2) to menaquinol (MKH2) and the conversion of 2-polyprenyl-6-methoxy-1,4-benzoquinol (DDMQH2) to 2-polyprenyl-3-methyl-6-methoxy-1,4-benzoquinol (DMQH2). The chain is Ubiquinone/menaquinone biosynthesis C-methyltransferase UbiE from Rhizobium leguminosarum bv. trifolii (strain WSM2304).